The sequence spans 78 residues: Mandibular organ-inhibiting hormone 2 (78 aa).

3 disulfides stabilise this stretch: C7–C44, C24–C40, and C27–C53.

It belongs to the arthropod CHH/MIH/GIH/VIH hormone family. Produced by the medulla terminalis X-organ in the eyestalks and transported to the sinus gland where it is stored and released.

The protein resides in the secreted. Represses the synthesis of methyl farnesoate, the precursor of insect juvenile hormone III in the mandibular organ. This Cancer pagurus (Rock crab) protein is Mandibular organ-inhibiting hormone 2.